The following is a 294-amino-acid chain: Large ribosomal subunit protein uL18B (294 aa).

It belongs to the universal ribosomal protein uL18 family. As to quaternary structure, component of the large ribosomal subunit (LSU). Mature yeast ribosomes consist of a small (40S) and a large (60S) subunit. The 40S small subunit contains 1 molecule of ribosomal RNA (18S rRNA) and 33 different proteins (encoded by 57 genes). The large 60S subunit contains 3 rRNA molecules (25S, 5.8S and 5S rRNA) and 46 different proteins (encoded by 81 genes). Component of a hexameric 5S RNP precursor complex, composed of 5S RNA, rrs1, rpf2, rpl5a/rpl5b, rpl11a/rpl11b and syo1; this complex acts as a precursor for ribosome assembly. rpl5a/rpl5b/uL18 forms a heterotrimeric complex with syo1 and rpl11a/rpl11b/uL5. Interaction of this complex with KAP104 allows the nuclear import of the heterotrimer.

It localises to the cytoplasm. Its subcellular location is the nucleus. Its function is as follows. Component of the ribosome, a large ribonucleoprotein complex responsible for the synthesis of proteins in the cell. The small ribosomal subunit (SSU) binds messenger RNAs (mRNAs) and translates the encoded message by selecting cognate aminoacyl-transfer RNA (tRNA) molecules. The large subunit (LSU) contains the ribosomal catalytic site termed the peptidyl transferase center (PTC), which catalyzes the formation of peptide bonds, thereby polymerizing the amino acids delivered by tRNAs into a polypeptide chain. The nascent polypeptides leave the ribosome through a tunnel in the LSU and interact with protein factors that function in enzymatic processing, targeting, and the membrane insertion of nascent chains at the exit of the ribosomal tunnel. The chain is Large ribosomal subunit protein uL18B (rpl502) from Schizosaccharomyces pombe (strain 972 / ATCC 24843) (Fission yeast).